Reading from the N-terminus, the 130-residue chain is MARKRGSSSRKQKKVGFDYGVVHIKSTFNNTIITLTDKDGNTLTWASGGTVGFEGTRKGTPYAAQLAADKVAREALRMGIKKVDILVKGPGPGREPAIRTLQGAGLEINQIKDVTPIPFNGCRPKKRRRV.

It belongs to the universal ribosomal protein uS11 family. As to quaternary structure, part of the 30S ribosomal subunit. Interacts with proteins S7 and S18. Binds to IF-3.

Functionally, located on the platform of the 30S subunit, it bridges several disparate RNA helices of the 16S rRNA. Forms part of the Shine-Dalgarno cleft in the 70S ribosome. The protein is Small ribosomal subunit protein uS11 of Thermotoga petrophila (strain ATCC BAA-488 / DSM 13995 / JCM 10881 / RKU-1).